Here is a 316-residue protein sequence, read N- to C-terminus: Malate dehydrogenase 2 (316 aa).

Residues 10 to 15 (GGGQIG) and D34 contribute to the NAD(+) site. Substrate is bound by residues R83 and R89. Residues N96 and 119 to 121 (ISN) each bind NAD(+). Positions 121 and 152 each coordinate substrate. The active-site Proton acceptor is H176.

Belongs to the LDH/MDH superfamily. MDH type 3 family.

It catalyses the reaction (S)-malate + NAD(+) = oxaloacetate + NADH + H(+). In terms of biological role, catalyzes the reversible oxidation of malate to oxaloacetate. This Anaeromyxobacter dehalogenans (strain 2CP-C) protein is Malate dehydrogenase 2.